The chain runs to 155 residues: Small ribosomal subunit protein bS16 (155 aa).

The interval 100 to 155 (EAGIPDPAPSTEEPAAVCEASAEMAGQPGEVEPAGAAAEPNSQEPEPEEEKPQVEA) is disordered. Residues 124-143 (AGQPGEVEPAGAAAEPNSQE) are compositionally biased toward low complexity.

It belongs to the bacterial ribosomal protein bS16 family.

This chain is Small ribosomal subunit protein bS16, found in Synechococcus sp. (strain JA-3-3Ab) (Cyanobacteria bacterium Yellowstone A-Prime).